Reading from the N-terminus, the 275-residue chain is Large ribosomal subunit protein uL2c (275 aa).

The tract at residues 225-252 is disordered; sequence MNPCDHPHGGGEGRSPIGRAKPVTPWGK.

Belongs to the universal ribosomal protein uL2 family. In terms of assembly, part of the 50S ribosomal subunit.

The protein resides in the plastid. It is found in the chloroplast. The sequence is that of Large ribosomal subunit protein uL2c (rpl2) from Guillardia theta (Cryptophyte).